The primary structure comprises 1409 residues: DNA-directed RNA polymerase subunit beta' (1409 aa).

C70, C72, C85, and C88 together coordinate Zn(2+). Mg(2+) is bound by residues D461, D463, and D465. Zn(2+) is bound by residues C820, C894, C901, and C904.

The protein belongs to the RNA polymerase beta' chain family. The RNAP catalytic core consists of 2 alpha, 1 beta, 1 beta' and 1 omega subunit. When a sigma factor is associated with the core the holoenzyme is formed, which can initiate transcription. Requires Mg(2+) as cofactor. Zn(2+) serves as cofactor.

It catalyses the reaction RNA(n) + a ribonucleoside 5'-triphosphate = RNA(n+1) + diphosphate. In terms of biological role, DNA-dependent RNA polymerase catalyzes the transcription of DNA into RNA using the four ribonucleoside triphosphates as substrates. The chain is DNA-directed RNA polymerase subunit beta' from Ralstonia nicotianae (strain ATCC BAA-1114 / GMI1000) (Ralstonia solanacearum).